A 610-amino-acid chain; its full sequence is Glutamine--fructose-6-phosphate aminotransferase [isomerizing] (610 aa).

The active-site Nucleophile; for GATase activity is the Cys-2. A Glutamine amidotransferase type-2 domain is found at 2 to 218 (CGIVGAVAQR…EGDVAEMTRR (217 aa)). 2 SIS domains span residues 286–426 (AAEI…QQQR) and 459–600 (LAED…VDQP). The active-site For Fru-6P isomerization activity is Lys-605.

Homodimer.

The protein localises to the cytoplasm. The enzyme catalyses D-fructose 6-phosphate + L-glutamine = D-glucosamine 6-phosphate + L-glutamate. Catalyzes the first step in hexosamine metabolism, converting fructose-6P into glucosamine-6P using glutamine as a nitrogen source. The sequence is that of Glutamine--fructose-6-phosphate aminotransferase [isomerizing] from Vibrio cholerae serotype O1 (strain ATCC 39315 / El Tor Inaba N16961).